A 354-amino-acid chain; its full sequence is Ornithine cyclodeaminase (354 aa).

Arg-53 and Lys-77 together coordinate L-ornithine. NAD(+) is bound by residues Thr-92, Arg-120, 147–148 (AQ), Asp-169, Thr-209, 232–235 (VGGD), Lys-239, and Ser-300. Arg-120 contacts L-ornithine. An L-ornithine-binding site is contributed by Asp-235. The active-site Proton donor/acceptor is Asp-235. Position 301 (Val-301) interacts with L-ornithine.

The protein belongs to the ornithine cyclodeaminase/mu-crystallin family. NAD(+) is required as a cofactor.

It carries out the reaction L-ornithine = L-proline + NH4(+). It participates in amino-acid biosynthesis; L-proline biosynthesis; L-proline from L-ornithine: step 1/1. Its activity is regulated as follows. Is subject to substrate inhibition. Is regulated by L-arginine, which stimulates enzymatic activity at 0.1-1 mM while inhibits activity at higher concentrations, and has pronounced effects on the optima for pH and temperature and on the Km for L-ornithine. Is not inhibited by L-proline. Catalyzes the conversion of L-ornithine into L-proline with release of ammonia. Is involved in the utilization of nopaline, a catabolic pathway that proceeds through L-arginine and L-ornithine to L-proline. Nopaline is a predominant opine in plant cells transformed with Ti plasmid pTiC58. The sequence is that of Ornithine cyclodeaminase from Agrobacterium fabrum (strain C58 / ATCC 33970) (Agrobacterium tumefaciens (strain C58)).